The sequence spans 160 residues: Cyclic pyranopterin monophosphate synthase (160 aa).

Residues L76–H78 and M114–E115 each bind substrate. The active site involves D129.

It belongs to the MoaC family. In terms of assembly, homohexamer; trimer of dimers.

It carries out the reaction (8S)-3',8-cyclo-7,8-dihydroguanosine 5'-triphosphate = cyclic pyranopterin phosphate + diphosphate. It functions in the pathway cofactor biosynthesis; molybdopterin biosynthesis. Catalyzes the conversion of (8S)-3',8-cyclo-7,8-dihydroguanosine 5'-triphosphate to cyclic pyranopterin monophosphate (cPMP). The chain is Cyclic pyranopterin monophosphate synthase from Mesorhizobium japonicum (strain LMG 29417 / CECT 9101 / MAFF 303099) (Mesorhizobium loti (strain MAFF 303099)).